Consider the following 230-residue polypeptide: 2,3-bisphosphoglycerate-dependent phosphoglycerate mutase (230 aa).

Substrate-binding positions include 10-17 (RHGESKWN), 23-24 (TG), Arg62, 89-92 (ERNY), Lys100, 116-117 (RR), and 185-186 (GN). His11 (tele-phosphohistidine intermediate) is an active-site residue. Glu89 (proton donor/acceptor) is an active-site residue.

It belongs to the phosphoglycerate mutase family. BPG-dependent PGAM subfamily. In terms of assembly, homodimer.

It carries out the reaction (2R)-2-phosphoglycerate = (2R)-3-phosphoglycerate. Its pathway is carbohydrate degradation; glycolysis; pyruvate from D-glyceraldehyde 3-phosphate: step 3/5. In terms of biological role, catalyzes the interconversion of 2-phosphoglycerate and 3-phosphoglycerate. In Buchnera aphidicola subsp. Cinara cedri (strain Cc), this protein is 2,3-bisphosphoglycerate-dependent phosphoglycerate mutase.